A 314-amino-acid polypeptide reads, in one-letter code: DNA-directed RNA polymerase subunit alpha (314 aa).

The interval 1 to 228 (MIEIEKPRIE…EHLNIFVSLT (228 aa)) is alpha N-terminal domain (alpha-NTD). An alpha C-terminal domain (alpha-CTD) region spans residues 245–314 (KEKVLEMSIE…DLGLGLRKED (70 aa)).

This sequence belongs to the RNA polymerase alpha chain family. Homodimer. The RNAP catalytic core consists of 2 alpha, 1 beta, 1 beta' and 1 omega subunit. When a sigma factor is associated with the core the holoenzyme is formed, which can initiate transcription.

It catalyses the reaction RNA(n) + a ribonucleoside 5'-triphosphate = RNA(n+1) + diphosphate. DNA-dependent RNA polymerase catalyzes the transcription of DNA into RNA using the four ribonucleoside triphosphates as substrates. This Staphylococcus epidermidis (strain ATCC 35984 / DSM 28319 / BCRC 17069 / CCUG 31568 / BM 3577 / RP62A) protein is DNA-directed RNA polymerase subunit alpha.